Here is a 154-residue protein sequence, read N- to C-terminus: UPF0756 membrane protein YtwI (154 aa).

The next 4 helical transmembrane spans lie at 8 to 28 (FLIL…LFAV), 54 to 74 (WGVT…EIGF), 87 to 107 (WIAL…LTLL), and 117 to 137 (LVIG…GPLI).

Belongs to the UPF0756 family.

It localises to the cell membrane. The chain is UPF0756 membrane protein YtwI (ytwI) from Bacillus subtilis (strain 168).